The sequence spans 490 residues: UDP-glycosyltransferase 73C7 (490 aa).

UDP-alpha-D-glucose contacts are provided by residues Ser-291, 351–353 (APQ), 368–376 (HCGWNSTLE), and 390–393 (FAEQ).

Belongs to the UDP-glycosyltransferase family.

This Arabidopsis thaliana (Mouse-ear cress) protein is UDP-glycosyltransferase 73C7 (UGT73C7).